Reading from the N-terminus, the 156-residue chain is Endoribonuclease YbeY (156 aa).

Residues His-122, His-126, and His-132 each coordinate Zn(2+).

It belongs to the endoribonuclease YbeY family. The cofactor is Zn(2+).

The protein resides in the cytoplasm. In terms of biological role, single strand-specific metallo-endoribonuclease involved in late-stage 70S ribosome quality control and in maturation of the 3' terminus of the 16S rRNA. The chain is Endoribonuclease YbeY from Geobacillus thermodenitrificans (strain NG80-2).